The sequence spans 98 residues: C-X-C motif chemokine 10 (98 aa).

Positions 1-21 (MNQSAVLIFCLIFLTLNGTQG) are cleaved as a signal peptide. Arg26 carries the post-translational modification Citrulline. 2 cysteine pairs are disulfide-bonded: Cys30-Cys57 and Cys32-Cys74.

Belongs to the intercrine alpha (chemokine CxC) family. Monomer, dimer, and tetramer. Interacts with CXCR3 (via N-terminus).

The protein resides in the secreted. Pro-inflammatory cytokine that is involved in a wide variety of processes such as chemotaxis, differentiation, and activation of peripheral immune cells, regulation of cell growth, apoptosis and modulation of angiostatic effects. Plays thereby an important role during viral infections by stimulating the activation and migration of immune cells to the infected sites. Mechanistically, binding of CXCL10 to the CXCR3 receptor activates G protein-mediated signaling and results in downstream activation of phospholipase C-dependent pathway, an increase in intracellular calcium production and actin reorganization. In turn, recruitment of activated Th1 lymphocytes occurs at sites of inflammation. Activation of the CXCL10/CXCR3 axis also plays an important role in neurons in response to brain injury for activating microglia, the resident macrophage population of the central nervous system, and directing them to the lesion site. This recruitment is an essential element for neuronal reorganization. This chain is C-X-C motif chemokine 10 (CXCL10), found in Canis lupus familiaris (Dog).